Reading from the N-terminus, the 776-residue chain is MRRFSTLSRRLQRVVPASSASTANTSPSPALYTGLEPKIKESQDSLIRAVFDNGDVWQDFSQKSVAKPKQSRSITGFINYLTNESDYETGLFMNDFLKTPAGFQKYTAASIEEAGQLIQQLLGALTQRDKLRHAITTFDRLSDVLCQVIDLAEFIRAAHPEQHFVQAAQEAHEQMYEYMNVLNTSVELYTVLDMVFKDSEIVNQLTHEEKVVGTLLLEDFKKSGVTLDDAGRENFVSLTTKISLLGRDFISSNHPKEDYITLTQGEAQGLDPQLAQQLSQGNSVYVPTGGVPGQLALRGMKNENSRKLLWSKMRESSDKSIESLEDLLVSRLELANLMGKESYADYLLSDKMAGNPENVMRFLNGLLDKTLPGAKKELSVLEQIKKQATGNPKSILQAWDKSYYASQLLYQKRNKTKTAHMLSEYFSVGTVVQGLSRIFDKIYGIRFVPTETKTGETWHHDVRRLDVVSETEGLIGIMYADLFQREGKSPNPAHFTVRCSREIYPDELAHMSSSPIAKVPTLNLNGKVFQIPTIALICDFTTPHDLYPSLLSYQEVETLFHEMGHAIHSMLGRTSLHNVCGTRCATDFVELPSVFMENFASNPESLALFARHYSSDSPLPYQQLERHLNEQSYFKDVEQYTQIKMAMLDQVLHGNILKSITNGHFNSQKLYDNLEKDRPLFPPSPSSWHGSFGHLFGYGASYYCYLLDRQMADIVWKKLFSKNPLSRDAGSRMKNEVLQWGGSRDPWECIAGVLEDPELAKGGSQAMEKIGNYDKH.

The N-terminal 28 residues, 1–28 (MRRFSTLSRRLQRVVPASSASTANTSPS), are a transit peptide targeting the mitochondrion. His561 is a Zn(2+) binding site. Glu562 is a catalytic residue. Zn(2+) is bound by residues His565 and His568.

Belongs to the peptidase M3 family. The cofactor is Zn(2+).

The protein localises to the mitochondrion matrix. The catalysed reaction is Release of an N-terminal octapeptide as second stage of processing of some proteins imported into the mitochondrion.. Its function is as follows. Cleaves proteins, imported into the mitochondrion, to their mature size. While most mitochondrial precursor proteins are processed to the mature form in one step by mitochondrial processing peptidase (MPP), the sequential cleavage by MIP of an octapeptide after initial processing by MPP is a required step for a subgroup of nuclear-encoded precursor proteins destined for the matrix or the inner membrane. In Yarrowia lipolytica (strain CLIB 122 / E 150) (Yeast), this protein is Mitochondrial intermediate peptidase (OCT1).